The following is a 358-amino-acid chain: Insulin gene enhancer protein ISL-2A (358 aa).

LIM zinc-binding domains lie at C27–D80 and C89–H143. Positions T190–S249 form a DNA-binding region, homeobox. Over residues E325 to S335 the composition is skewed to low complexity. Residues E325–T358 form a disordered region. Positions D336–T358 are enriched in polar residues.

It localises to the nucleus. Binds to one of the cis-acting domain of the insulin gene enhancer. May be involved in subtype specialization of primary motoneurons. The sequence is that of Insulin gene enhancer protein ISL-2A (isl2a) from Oncorhynchus tshawytscha (Chinook salmon).